Reading from the N-terminus, the 183-residue chain is MVRKLKHHEQKLLKKVDFLEWKQDQGHRDTQVMRTYHIQNREDYHKYNRICGDIRRLANKLSLLPPTDPFRRKHEQLLLDKLYAMGVLTTKSKISDLENKVTVSAICRRRLPVIMHRLKMAETIQDAVKFIEQGHVRVGPNLINDPAYLVTRNMEDYVTWVDNSKIKKTLLRYRNQIDDFDFS.

One can recognise an S4 RNA-binding domain in the interval Arg-109 to Asn-175.

This sequence belongs to the universal ribosomal protein uS4 family. As to quaternary structure, component of a heterotrimeric complex containing IMP3, IMP4 and MPP10. Interacts with MPP10. Component of the ribosomal small subunit (SSU) processome composed of at least 40 protein subunits and snoRNA U3.

Its subcellular location is the nucleus. The protein resides in the nucleolus. Its function is as follows. Required for the early cleavages at sites A0, A1 and A2 during 18S ribosomal pre-RNA processing. In Saccharomyces cerevisiae (strain ATCC 204508 / S288c) (Baker's yeast), this protein is U3 small nucleolar ribonucleoprotein protein IMP3 (IMP3).